Consider the following 219-residue polypeptide: Thiamine-phosphate synthase (219 aa).

4-amino-2-methyl-5-(diphosphooxymethyl)pyrimidine contacts are provided by residues 48–52 (QFRQK) and Asn84. Residues Asp85 and Asp104 each contribute to the Mg(2+) site. Ser123 is a 4-amino-2-methyl-5-(diphosphooxymethyl)pyrimidine binding site. 150–152 (TQS) is a binding site for 2-[(2R,5Z)-2-carboxy-4-methylthiazol-5(2H)-ylidene]ethyl phosphate. Lys153 contributes to the 4-amino-2-methyl-5-(diphosphooxymethyl)pyrimidine binding site. 2-[(2R,5Z)-2-carboxy-4-methylthiazol-5(2H)-ylidene]ethyl phosphate-binding positions include Gly181 and 199–200 (IS).

This sequence belongs to the thiamine-phosphate synthase family. Requires Mg(2+) as cofactor.

The enzyme catalyses 2-[(2R,5Z)-2-carboxy-4-methylthiazol-5(2H)-ylidene]ethyl phosphate + 4-amino-2-methyl-5-(diphosphooxymethyl)pyrimidine + 2 H(+) = thiamine phosphate + CO2 + diphosphate. The catalysed reaction is 2-(2-carboxy-4-methylthiazol-5-yl)ethyl phosphate + 4-amino-2-methyl-5-(diphosphooxymethyl)pyrimidine + 2 H(+) = thiamine phosphate + CO2 + diphosphate. It catalyses the reaction 4-methyl-5-(2-phosphooxyethyl)-thiazole + 4-amino-2-methyl-5-(diphosphooxymethyl)pyrimidine + H(+) = thiamine phosphate + diphosphate. It functions in the pathway cofactor biosynthesis; thiamine diphosphate biosynthesis; thiamine phosphate from 4-amino-2-methyl-5-diphosphomethylpyrimidine and 4-methyl-5-(2-phosphoethyl)-thiazole: step 1/1. In terms of biological role, condenses 4-methyl-5-(beta-hydroxyethyl)thiazole monophosphate (THZ-P) and 2-methyl-4-amino-5-hydroxymethyl pyrimidine pyrophosphate (HMP-PP) to form thiamine monophosphate (TMP). The protein is Thiamine-phosphate synthase of Helicobacter pylori (strain Shi470).